Reading from the N-terminus, the 218-residue chain is Ribosomal RNA small subunit methyltransferase G (218 aa).

Residues Gly86, Leu91, 137–138 (AE), and Arg153 contribute to the S-adenosyl-L-methionine site.

This sequence belongs to the methyltransferase superfamily. RNA methyltransferase RsmG family.

It is found in the cytoplasm. The catalysed reaction is guanosine(527) in 16S rRNA + S-adenosyl-L-methionine = N(7)-methylguanosine(527) in 16S rRNA + S-adenosyl-L-homocysteine. Specifically methylates the N7 position of guanine in position 527 of 16S rRNA. In Nitratidesulfovibrio vulgaris (strain ATCC 29579 / DSM 644 / CCUG 34227 / NCIMB 8303 / VKM B-1760 / Hildenborough) (Desulfovibrio vulgaris), this protein is Ribosomal RNA small subunit methyltransferase G.